Consider the following 116-residue polypeptide: Phosphoribosyl-ATP pyrophosphatase (116 aa).

Belongs to the PRA-PH family.

It localises to the cytoplasm. It catalyses the reaction 1-(5-phospho-beta-D-ribosyl)-ATP + H2O = 1-(5-phospho-beta-D-ribosyl)-5'-AMP + diphosphate + H(+). Its pathway is amino-acid biosynthesis; L-histidine biosynthesis; L-histidine from 5-phospho-alpha-D-ribose 1-diphosphate: step 2/9. The polypeptide is Phosphoribosyl-ATP pyrophosphatase (Nitrobacter winogradskyi (strain ATCC 25391 / DSM 10237 / CIP 104748 / NCIMB 11846 / Nb-255)).